Consider the following 108-residue polypeptide: Replication restart protein PriB (108 aa).

Positions 8–108 (VDNRFSLIGK…LHAEQIEFIE (101 aa)) constitute an SSB domain.

Belongs to the PriB family. Homodimer. Interacts with PriA and DnaT. Component of the replication restart primosome. Primosome assembly occurs via a 'hand-off' mechanism. PriA binds to replication forks, subsequently PriB then DnaT bind; DnaT then displaces ssDNA to generate the helicase loading substrate.

Involved in the restart of stalled replication forks, which reloads the replicative helicase on sites other than the origin of replication; the PriA-PriB pathway is the major replication restart pathway. During primosome assembly it facilitates complex formation between PriA and DnaT on DNA; stabilizes PriA on DNA. Stimulates the DNA unwinding activity of PriA helicase. The protein is Replication restart protein PriB of Histophilus somni (strain 129Pt) (Haemophilus somnus).